A 1382-amino-acid chain; its full sequence is Hepatocyte growth factor receptor (1382 aa).

The first 24 residues, 1–24, serve as a signal peptide directing secretion; the sequence is MKSPAVLAPGILVFLFTFVQKSDG. Residues 25–933 are Extracellular-facing; it reads ECKEALVKSR…VIVQPDQNFT (909 aa). The 490-residue stretch at 27–516 folds into the Sema domain; sequence KEALVKSRMN…TGKKITKIPL (490 aa). A glycan (N-linked (GlcNAc...) asparagine) is linked at Asn45. 4 cysteine pairs are disulfide-bonded: Cys95-Cys101, Cys98-Cys160, Cys133-Cys141, and Cys173-Cys176. N-linked (GlcNAc...) asparagine glycosylation is present at Asn106. A glycan (N-linked (GlcNAc...) asparagine) is linked at Asn149. Asn203 and Asn359 each carry an N-linked (GlcNAc...) asparagine glycan. Intrachain disulfides connect Cys299–Cys364 and Cys386–Cys398. N-linked (GlcNAc...) asparagine glycosylation is found at Asn400 and Asn406. Cystine bridges form between Cys521–Cys539, Cys527–Cys562, Cys530–Cys546, and Cys542–Cys552. IPT/TIG domains are found at residues 564 to 656, 658 to 740, and 743 to 837; these read PAIY…FSYV, PIIT…FIYR, and PIVY…LIYV. The O-linked (Man) threonine glycan is linked to Thr583. Residues Asn608 and Asn636 are each glycosylated (N-linked (GlcNAc...) asparagine). O-linked (Man) threonine glycosylation is found at Thr677 and Thr762. 3 N-linked (GlcNAc...) asparagine glycosylation sites follow: Asn786, Asn880, and Asn931. A helical transmembrane segment spans residues 934–956; the sequence is GLIVGVVSISIILLLLLGLFLWL. Topologically, residues 957-1382 are cytoplasmic; it reads KKRKQIKDLG…QDNVNGEGDT (426 aa). A Phosphoserine modification is found at Ser967. Position 978 is a phosphothreonine (Thr978). Residues Ser991, Ser998, and Ser1001 each carry the phosphoserine modification. Position 1004 is a phosphotyrosine (Tyr1004). The Protein kinase domain occupies 1079-1346; that stretch reads VHFNEVIGRG…RISAIFSTFI (268 aa). ATP is bound by residues 1085–1093 and Lys1111; that span reads IGRGHFGCV. Asp1205 (proton acceptor) is an active-site residue. Positions 1213–1382 are interaction with RANBP9; the sequence is LDEKFTVKVA…QDNVNGEGDT (170 aa). Tyr1231 carries the phosphotyrosine modification. 2 positions are modified to phosphotyrosine; by autocatalysis: Tyr1235 and Tyr1236. At Thr1290 the chain carries Phosphothreonine. The tract at residues 1321 to 1360 is interaction with MUC20; the sequence is WHPKAELRPSFSELVSRISAIFSTFIGEHYVHVNATYVNV. Residues Tyr1350 and Tyr1357 each carry the phosphotyrosine; by autocatalysis modification. Position 1366 is a phosphotyrosine (Tyr1366).

This sequence belongs to the protein kinase superfamily. Tyr protein kinase family. Heterodimer made of an alpha chain (50 kDa) and a beta chain (145 kDa) which are disulfide linked. Binds PLXNB1. Interacts when phosphorylated with downstream effectors including STAT3, PIK3R1, SRC, PCLG1, GRB2 and GAB1. Interacts with SPSB1, SPSB2 and SPSB4. Interacts with INPP5D/SHIP1. When phosphorylated at Tyr-1357, interacts with INPPL1/SHIP2. Interacts with RANBP9 and RANBP10, as well as SPSB1, SPSB2, SPSB3 and SPSB4. SPSB1 binding occurs in the presence and in the absence of HGF, however HGF treatment has a positive effect on this interaction. Interacts with MUC20; prevents interaction with GRB2 and suppresses hepatocyte growth factor-induced cell proliferation. Interacts with GRB10. Interacts with PTPN1 and PTPN2. Interacts with HSP90AA1 and HSP90AB1; the interaction suppresses MET kinase activity. Interacts with tensin TNS3. Interacts (when phosphorylated) with tensin TNS4 (via SH2 domain); the interaction increases MET protein stability by inhibiting MET endocytosis and subsequent lysosomal degradation. Post-translationally, autophosphorylated in response to ligand binding on Tyr-1235 and Tyr-1236 in the kinase domain leading to further phosphorylation of Tyr-1350 and Tyr-1357 in the C-terminal multifunctional docking site. Dephosphorylated by PTPRJ at Tyr-1350 and Tyr-1366. Dephosphorylated by PTPN1 and PTPN2. In terms of processing, ubiquitinated. Ubiquitination by CBL regulates the receptor stability and activity through proteasomal degradation. O-mannosylation of IPT/TIG domains by TMEM260 is required for protein maturation. O-mannosylated residues are composed of single mannose glycans that are not elongated or modified.

Its subcellular location is the membrane. It catalyses the reaction L-tyrosyl-[protein] + ATP = O-phospho-L-tyrosyl-[protein] + ADP + H(+). In its inactive state, the C-terminal tail interacts with the catalytic domain and inhibits the kinase activity. Upon ligand binding, the C-terminal tail is displaced and becomes phosphorylated, thus increasing the kinase activity. Its function is as follows. Receptor tyrosine kinase that transduces signals from the extracellular matrix into the cytoplasm by binding to hepatocyte growth factor/HGF ligand. Regulates many physiological processes including proliferation, scattering, morphogenesis and survival. Ligand binding at the cell surface induces autophosphorylation of MET on its intracellular domain that provides docking sites for downstream signaling molecules. Following activation by ligand, interacts with the PI3-kinase subunit PIK3R1, PLCG1, SRC, GRB2, STAT3 or the adapter GAB1. Recruitment of these downstream effectors by MET leads to the activation of several signaling cascades including the RAS-ERK, PI3 kinase-AKT, or PLCgamma-PKC. The RAS-ERK activation is associated with the morphogenetic effects while PI3K/AKT coordinates prosurvival effects. During embryonic development, MET signaling plays a role in gastrulation, development and migration of muscles and neuronal precursors, angiogenesis and kidney formation. In adults, participates in wound healing as well as organ regeneration and tissue remodeling. Also promotes differentiation and proliferation of hematopoietic cells. The protein is Hepatocyte growth factor receptor (MET) of Muntiacus muntjak (Barking deer).